The following is a 259-amino-acid chain: Ribosomal RNA small subunit methyltransferase A (259 aa).

Positions 13, 15, 39, 60, 84, and 101 each coordinate S-adenosyl-L-methionine.

The protein belongs to the class I-like SAM-binding methyltransferase superfamily. rRNA adenine N(6)-methyltransferase family. RsmA subfamily.

It is found in the cytoplasm. The enzyme catalyses adenosine(1518)/adenosine(1519) in 16S rRNA + 4 S-adenosyl-L-methionine = N(6)-dimethyladenosine(1518)/N(6)-dimethyladenosine(1519) in 16S rRNA + 4 S-adenosyl-L-homocysteine + 4 H(+). In terms of biological role, specifically dimethylates two adjacent adenosines (A1518 and A1519) in the loop of a conserved hairpin near the 3'-end of 16S rRNA in the 30S particle. May play a critical role in biogenesis of 30S subunits. The chain is Ribosomal RNA small subunit methyltransferase A from Mesomycoplasma hyopneumoniae (strain 232) (Mycoplasma hyopneumoniae).